The sequence spans 79 residues: Protein SNA2 (79 aa).

The Cytoplasmic portion of the chain corresponds to 1–6; that stretch reads MHARDW. The helical transmembrane segment at 7-27 threads the bilayer; the sequence is FLVFIAIFIPPLAVWLKRGFF. At 28–32 the chain is on the vesicular side; sequence TKDLL. Residues 33 to 53 traverse the membrane as a helical segment; the sequence is INFLLFLLGFFPGLIHALYVI. Topologically, residues 54–79 are cytoplasmic; that stretch reads SCHPYEENEARYSHLSSSDDNYGSLA. Serine 71 and serine 77 each carry phosphoserine.

It belongs to the UPF0057 (PMP3) family.

It is found in the membrane. It localises to the lipid droplet. The chain is Protein SNA2 (SNA2) from Saccharomyces cerevisiae (strain ATCC 204508 / S288c) (Baker's yeast).